A 452-amino-acid polypeptide reads, in one-letter code: UDP-glycosyltransferase 79B11 (452 aa).

UDP-alpha-D-glucose contacts are provided by residues serine 260, 319–325 (VQQPSWQ), 340–348 (HCGFGSMWE), and 362–365 (LNDQ).

It belongs to the UDP-glycosyltransferase family.

The protein is UDP-glycosyltransferase 79B11 (UGT79B11) of Arabidopsis thaliana (Mouse-ear cress).